The following is a 251-amino-acid chain: Bidirectional sugar transporter SWEET4 (251 aa).

Over 1-12 (MVNATVARNIAG) the chain is Extracellular. The N-linked (GlcNAc...) asparagine glycan is linked to Asn-3. The region spanning 12 to 96 (GICGNVISLF…LAIFFFFSPT (85 aa)) is the MtN3/slv 1 domain. A helical transmembrane segment spans residues 13–33 (ICGNVISLFLFLSPIPTFITI). Topologically, residues 34-45 (YKKKKVEEYKAD) are cytoplasmic. A helical transmembrane segment spans residues 46–66 (PYLATVLNCALWVFYGLPMVQ). Topologically, residues 67–72 (PDSLLV) are extracellular. The chain crosses the membrane as a helical span at residues 73–93 (ITINGTGLAIELVYLAIFFFF). Over 94 to 103 (SPTSRKVKVG) the chain is Cytoplasmic. Residues 104–124 (LWLIGEMVFVGIVATCTLLLF) traverse the membrane as a helical segment. At 125–132 (HTHNQRSS) the chain is on the extracellular side. The helical transmembrane segment at 133-153 (FVGIFCVIFVSLMYIAPLTIM) threads the bilayer. A MtN3/slv 2 domain is found at 133–216 (FVGIFCVIFV…LILYACYYKT (84 aa)). The Cytoplasmic segment spans residues 154–163 (SKVIKTKSVK). A helical membrane pass occupies residues 164–186 (YMPFSLSLANFLNGVVWVIYALI). At 187 to 190 (KFDL) the chain is on the extracellular side. Residues 191–213 (FILIGNGLGTVSGAVQLILYACY) traverse the membrane as a helical segment. Topologically, residues 214-251 (YKTTPKDDEDEEDEENLSKVNSQLQLSGNSGQAKRVSA) are cytoplasmic. A disordered region spans residues 220 to 251 (DDEDEEDEENLSKVNSQLQLSGNSGQAKRVSA). Positions 231–245 (SKVNSQLQLSGNSGQ) are enriched in polar residues.

Belongs to the SWEET sugar transporter family. Forms homooligomers and heterooligomers with SWEET8 and SWEET17.

The protein localises to the cell membrane. Its function is as follows. Mediates both low-affinity uptake and efflux of sugar across the plasma membrane. The polypeptide is Bidirectional sugar transporter SWEET4 (Arabidopsis thaliana (Mouse-ear cress)).